We begin with the raw amino-acid sequence, 115 residues long: Glycine cleavage system H-like protein (115 aa).

The Lipoyl-binding domain maps to 17 to 99; the sequence is VVRLGLTEKM…EGEGWLAVVR (83 aa). The residue at position 58 (K58) is an N6-lipoyllysine.

The protein belongs to the GcvH family. It depends on (R)-lipoate as a cofactor.

The protein is Glycine cleavage system H-like protein of Chlamydia pneumoniae (Chlamydophila pneumoniae).